The following is a 434-amino-acid chain: Protein arginine N-methyltransferase 2 (434 aa).

Residues Ile-155–Glu-198 form a disordered region. A compositionally biased stretch (basic and acidic residues) spans Asp-178 to Pro-193. An RMT2 domain is found at Pro-193–Val-434. S-adenosyl-L-methionine contacts are provided by residues Tyr-200, Met-230, Phe-258–Ile-263, Glu-279–His-281, Trp-306–Gln-307, and Asp-327.

This sequence belongs to the class I-like SAM-binding methyltransferase superfamily. RMT2 methyltransferase family. Monomer.

It localises to the cytoplasm. It is found in the nucleus. Its function is as follows. S-adenosyl-L-methionine-dependent protein-arginine N-methyltransferase that methylates the delta-nitrogen atom of arginine residues to form N5-methylarginine (type IV) in target proteins. Monomethylates ribosomal protein L12. In Debaryomyces hansenii (strain ATCC 36239 / CBS 767 / BCRC 21394 / JCM 1990 / NBRC 0083 / IGC 2968) (Yeast), this protein is Protein arginine N-methyltransferase 2.